The primary structure comprises 66 residues: Large ribosomal subunit protein bL33 (66 aa).

Belongs to the bacterial ribosomal protein bL33 family.

In Wolbachia sp. subsp. Brugia malayi (strain TRS), this protein is Large ribosomal subunit protein bL33.